A 445-amino-acid chain; its full sequence is Gamma-glutamyl phosphate reductase (445 aa).

Belongs to the gamma-glutamyl phosphate reductase family.

The protein localises to the cytoplasm. The catalysed reaction is L-glutamate 5-semialdehyde + phosphate + NADP(+) = L-glutamyl 5-phosphate + NADPH + H(+). The protein operates within amino-acid biosynthesis; L-proline biosynthesis; L-glutamate 5-semialdehyde from L-glutamate: step 2/2. Functionally, catalyzes the NADPH-dependent reduction of L-glutamate 5-phosphate into L-glutamate 5-semialdehyde and phosphate. The product spontaneously undergoes cyclization to form 1-pyrroline-5-carboxylate. The sequence is that of Gamma-glutamyl phosphate reductase from Persephonella marina (strain DSM 14350 / EX-H1).